The following is a 192-amino-acid chain: Flavin prenyltransferase UbiX (192 aa).

FMN contacts are provided by residues 10-12 (GAS), Ser-36, 92-95 (SVAT), and Arg-127. Positions 157 and 173 each coordinate dimethylallyl phosphate.

It belongs to the UbiX/PAD1 family.

It catalyses the reaction dimethylallyl phosphate + FMNH2 = prenylated FMNH2 + phosphate. Flavin prenyltransferase that catalyzes the synthesis of the prenylated FMN cofactor (prenyl-FMN) for 4-hydroxy-3-polyprenylbenzoic acid decarboxylase UbiD. The prenyltransferase is metal-independent and links a dimethylallyl moiety from dimethylallyl monophosphate (DMAP) to the flavin N5 and C6 atoms of FMN. In Chlamydia trachomatis serovar D (strain ATCC VR-885 / DSM 19411 / UW-3/Cx), this protein is Flavin prenyltransferase UbiX.